Here is a 277-residue protein sequence, read N- to C-terminus: Undecaprenyl-diphosphatase 1 (277 aa).

7 consecutive transmembrane segments (helical) span residues 46–66 (VVGF…VYFF), 95–115 (WWVI…KSLI), 119–139 (LASL…MWAA), 165–185 (ILAL…TALI), 191–211 (VAAT…AGLY), 216–236 (ALGT…SFVV), and 256–276 (FVIY…TGVL).

The protein belongs to the UppP family.

The protein resides in the cell membrane. It carries out the reaction di-trans,octa-cis-undecaprenyl diphosphate + H2O = di-trans,octa-cis-undecaprenyl phosphate + phosphate + H(+). Catalyzes the dephosphorylation of undecaprenyl diphosphate (UPP). Confers resistance to bacitracin. In Streptomyces avermitilis (strain ATCC 31267 / DSM 46492 / JCM 5070 / NBRC 14893 / NCIMB 12804 / NRRL 8165 / MA-4680), this protein is Undecaprenyl-diphosphatase 1.